Reading from the N-terminus, the 301-residue chain is Putative hydro-lyase C5H10.01 (301 aa).

It belongs to the D-glutamate cyclase family.

This is Putative hydro-lyase C5H10.01 from Schizosaccharomyces pombe (strain 972 / ATCC 24843) (Fission yeast).